The chain runs to 196 residues: Cilia- and flagella-associated protein 107 (196 aa).

Mn regions lie at residues 47–62 (TPQC…MPDH) and 97–109 (ISTY…RHNY).

In terms of assembly, microtubule inner protein component of sperm flagellar doublet microtubules.

The protein localises to the cytoplasm. It localises to the cytoskeleton. Its subcellular location is the cilium axoneme. The protein resides in the flagellum axoneme. Its function is as follows. Microtubule inner protein (MIP) part of the dynein-decorated doublet microtubules (DMTs) in cilia axoneme, which is required for motile cilia beating. The chain is Cilia- and flagella-associated protein 107 from Mus musculus (Mouse).